The following is a 472-amino-acid chain: 3-isopropylmalate dehydratase large subunit (472 aa).

Residues Cys347, Cys407, and Cys410 each contribute to the [4Fe-4S] cluster site.

It belongs to the aconitase/IPM isomerase family. LeuC type 1 subfamily. As to quaternary structure, heterodimer of LeuC and LeuD. Requires [4Fe-4S] cluster as cofactor.

The enzyme catalyses (2R,3S)-3-isopropylmalate = (2S)-2-isopropylmalate. The protein operates within amino-acid biosynthesis; L-leucine biosynthesis; L-leucine from 3-methyl-2-oxobutanoate: step 2/4. In terms of biological role, catalyzes the isomerization between 2-isopropylmalate and 3-isopropylmalate, via the formation of 2-isopropylmaleate. This is 3-isopropylmalate dehydratase large subunit from Opitutus terrae (strain DSM 11246 / JCM 15787 / PB90-1).